Here is a 219-residue protein sequence, read N- to C-terminus: Predicted GPI-anchored protein 6 (219 aa).

An N-terminal signal peptide occupies residues 1–19 (MQFQTLLVVAGSLVASTLA). 3 N-linked (GlcNAc...) asparagine glycosylation sites follow: N21, N173, and N188. G194 carries the GPI-anchor amidated glycine lipid modification. A propeptide spans 195 to 219 (GAVGGASNQITVGFAAIAGLAAILL) (removed in mature form).

The protein belongs to the flocculin family. In terms of processing, the GPI-anchor is attached to the protein in the endoplasmic reticulum and serves to target the protein to the cell surface. There, the glucosamine-inositol phospholipid moiety is cleaved off and the GPI-modified mannoprotein is covalently attached via its lipidless GPI glycan remnant to the 1,6-beta-glucan of the outer cell wall layer.

The protein localises to the secreted. Its subcellular location is the cell wall. The protein resides in the membrane. In terms of biological role, probable cell wall protein that participates directly in adhesive cell-cell interactions. The chain is Predicted GPI-anchored protein 6 (PGA6) from Candida albicans (strain SC5314 / ATCC MYA-2876) (Yeast).